Reading from the N-terminus, the 127-residue chain is Protein ApaG (127 aa).

In terms of domain architecture, ApaG spans D3–H127.

This is Protein ApaG from Dechloromonas aromatica (strain RCB).